A 249-amino-acid polypeptide reads, in one-letter code: Ribosomal RNA small subunit methyltransferase G (249 aa).

S-adenosyl-L-methionine contacts are provided by residues Gly-88, Phe-93, 111–113 (DAT), 139–140 (AE), and Arg-158. A disulfide bridge connects residues Cys-164 and Cys-249. Residues 245–246 (RH) are RNA binding.

This sequence belongs to the methyltransferase superfamily. RNA methyltransferase RsmG family.

The protein resides in the cytoplasm. It catalyses the reaction guanosine(527) in 16S rRNA + S-adenosyl-L-methionine = N(7)-methylguanosine(527) in 16S rRNA + S-adenosyl-L-homocysteine. Specifically methylates the N7 position of guanine in position 527 of 16S rRNA. Shows a marked preference for deproteinized 16S rRNA as substrate and is completely inactive with native 30S subunits as substrate. This is Ribosomal RNA small subunit methyltransferase G from Thermus thermophilus (strain ATCC 27634 / DSM 579 / HB8).